Reading from the N-terminus, the 501-residue chain is UDP-N-acetylmuramoyl-L-alanyl-D-glutamate--2,6-diaminopimelate ligase (501 aa).

UDP-N-acetyl-alpha-D-muramoyl-L-alanyl-D-glutamate contacts are provided by residues leucine 26, serine 28, and 43–45; that span reads HQC. 123–129 is a binding site for ATP; sequence GTNGKTT. UDP-N-acetyl-alpha-D-muramoyl-L-alanyl-D-glutamate-binding positions include asparagine 164, 165 to 166, serine 192, glutamine 198, and arginine 200; that span reads TT. Residue lysine 232 is modified to N6-carboxylysine. Residues arginine 398, 422 to 425, glycine 473, and glutamate 477 contribute to the meso-2,6-diaminopimelate site; that span reads DNPR. The Meso-diaminopimelate recognition motif signature appears at 422–425; sequence DNPR.

The protein belongs to the MurCDEF family. MurE subfamily. It depends on Mg(2+) as a cofactor. Post-translationally, carboxylation is probably crucial for Mg(2+) binding and, consequently, for the gamma-phosphate positioning of ATP.

It is found in the cytoplasm. It catalyses the reaction UDP-N-acetyl-alpha-D-muramoyl-L-alanyl-D-glutamate + meso-2,6-diaminopimelate + ATP = UDP-N-acetyl-alpha-D-muramoyl-L-alanyl-gamma-D-glutamyl-meso-2,6-diaminopimelate + ADP + phosphate + H(+). It participates in cell wall biogenesis; peptidoglycan biosynthesis. Catalyzes the addition of meso-diaminopimelic acid to the nucleotide precursor UDP-N-acetylmuramoyl-L-alanyl-D-glutamate (UMAG) in the biosynthesis of bacterial cell-wall peptidoglycan. This Haemophilus ducreyi (strain 35000HP / ATCC 700724) protein is UDP-N-acetylmuramoyl-L-alanyl-D-glutamate--2,6-diaminopimelate ligase.